We begin with the raw amino-acid sequence, 196 residues long: uncharacterized protein (196 aa).

It to H.influenzae HI_0431.

This is an uncharacterized protein from Salmonella typhi.